The sequence spans 265 residues: Palmitoyltransferase ZDHHC21 (265 aa).

Over 1–16 the chain is Cytoplasmic; the sequence is MGLRIHFVVDPHGWCC. A helical membrane pass occupies residues 17–37; sequence MGLIVFVWLYNIVLIPKIVLF. Residues 38 to 44 lie on the Extracellular side of the membrane; sequence PHYEEGH. Residues 45 to 65 form a helical membrane-spanning segment; the sequence is IPGILIIIFYGISIFCLVALV. The Cytoplasmic portion of the chain corresponds to 66–133; the sequence is RASITDPGRL…NNCVGEDNHW (68 aa). Residues 90–140 enclose the DHHC domain; the sequence is ELCNKCNLMRPKRSHHCSRCGHCVRRMDHHCPWINNCVGEDNHWLFLQLCF. Cys120 (S-palmitoyl cysteine intermediate) is an active-site residue. A helical membrane pass occupies residues 134–154; the sequence is LFLQLCFYTELLTCYALMFSF. The Extracellular segment spans residues 155–185; sequence CHYYYFLPLKKRNLDLFVFRHELAIMRLAAF. A helical transmembrane segment spans residues 186–206; that stretch reads MGITMLVGITGLFYTQLIGII. Topologically, residues 207-265 are cytoplasmic; that stretch reads TDTTSIEKMSNCCEDISRPRKPWQQTFSEVFGTRWKILWFIPFRQRQPLRVPYHFANHV.

It belongs to the DHHC palmitoyltransferase family. In terms of tissue distribution, widely expressed.

Its subcellular location is the golgi apparatus membrane. It localises to the golgi apparatus. It is found in the cis-Golgi network membrane. The protein localises to the cell membrane. It carries out the reaction L-cysteinyl-[protein] + hexadecanoyl-CoA = S-hexadecanoyl-L-cysteinyl-[protein] + CoA. Its function is as follows. Palmitoyltransferase that catalyzes the addition of palmitate onto various protein substrates. Palmitoylates sex steroid hormone receptors, including ESR1, PGR and AR, thereby regulating their targeting to the plasma membrane. This affects rapid intracellular signaling by sex hormones via ERK and AKT kinases and the generation of cAMP, but does not affect that mediated by their nuclear receptor. Palmitoylates FYN, regulates its localization in hair follicles and plays a key role in epidermal homeostasis and hair follicle differentiation. Through the palmitoylation of PLCB1 and the regulation of PLCB1 downstream signaling may indirectly regulate the function of the endothelial barrier and the adhesion of leukocytes to the endothelium. Also has a palmitoyltransferase activity toward ADRA1D, positively regulating its activity and expression and may thereby play a role in vascular contraction. May also palmitoylate eNOS and LCK. The chain is Palmitoyltransferase ZDHHC21 from Homo sapiens (Human).